The primary structure comprises 184 residues: ATP synthase subunit b, chloroplastic (184 aa).

The chain crosses the membrane as a helical span at residues 27-49 (LATNPINLSVVFGVLIFFGKGVL).

This sequence belongs to the ATPase B chain family. As to quaternary structure, F-type ATPases have 2 components, F(1) - the catalytic core - and F(0) - the membrane proton channel. F(1) has five subunits: alpha(3), beta(3), gamma(1), delta(1), epsilon(1). F(0) has four main subunits: a(1), b(1), b'(1) and c(10-14). The alpha and beta chains form an alternating ring which encloses part of the gamma chain. F(1) is attached to F(0) by a central stalk formed by the gamma and epsilon chains, while a peripheral stalk is formed by the delta, b and b' chains.

Its subcellular location is the plastid. It localises to the chloroplast thylakoid membrane. Functionally, f(1)F(0) ATP synthase produces ATP from ADP in the presence of a proton or sodium gradient. F-type ATPases consist of two structural domains, F(1) containing the extramembraneous catalytic core and F(0) containing the membrane proton channel, linked together by a central stalk and a peripheral stalk. During catalysis, ATP synthesis in the catalytic domain of F(1) is coupled via a rotary mechanism of the central stalk subunits to proton translocation. In terms of biological role, component of the F(0) channel, it forms part of the peripheral stalk, linking F(1) to F(0). In Arabis hirsuta (Hairy rock-cress), this protein is ATP synthase subunit b, chloroplastic.